Consider the following 237-residue polypeptide: Ribose-5-phosphate isomerase A (237 aa).

Substrate-binding positions include 30 to 33, 87 to 90, and 100 to 103; these read SGST, DGAD, and KGGG. Catalysis depends on Glu-109, which acts as the Proton acceptor. Lys-127 serves as a coordination point for substrate.

It belongs to the ribose 5-phosphate isomerase family. As to quaternary structure, homodimer.

It carries out the reaction aldehydo-D-ribose 5-phosphate = D-ribulose 5-phosphate. Its pathway is carbohydrate degradation; pentose phosphate pathway; D-ribose 5-phosphate from D-ribulose 5-phosphate (non-oxidative stage): step 1/1. Its function is as follows. Catalyzes the reversible conversion of ribose-5-phosphate to ribulose 5-phosphate. This chain is Ribose-5-phosphate isomerase A, found in Synechococcus sp. (strain RCC307).